The sequence spans 216 residues: Orotate phosphoribosyltransferase (216 aa).

Residues R101, K105, H107, and 127–135 (EDLISTGGS) each bind 5-phospho-alpha-D-ribose 1-diphosphate. Position 131 (S131) interacts with orotate.

This sequence belongs to the purine/pyrimidine phosphoribosyltransferase family. PyrE subfamily. As to quaternary structure, homodimer. Mg(2+) serves as cofactor.

It carries out the reaction orotidine 5'-phosphate + diphosphate = orotate + 5-phospho-alpha-D-ribose 1-diphosphate. It participates in pyrimidine metabolism; UMP biosynthesis via de novo pathway; UMP from orotate: step 1/2. In terms of biological role, catalyzes the transfer of a ribosyl phosphate group from 5-phosphoribose 1-diphosphate to orotate, leading to the formation of orotidine monophosphate (OMP). This chain is Orotate phosphoribosyltransferase, found in Cutibacterium acnes (strain DSM 16379 / KPA171202) (Propionibacterium acnes).